A 208-amino-acid polypeptide reads, in one-letter code: Imidazole glycerol phosphate synthase subunit HisH (208 aa).

Residues 1–206 form the Glutamine amidotransferase type-1 domain; that stretch reads MIVIIDYDTG…KEVTESCKSS (206 aa). Catalysis depends on Cys-79, which acts as the Nucleophile. Active-site residues include His-181 and Glu-183.

Heterodimer of HisH and HisF.

The protein resides in the cytoplasm. It carries out the reaction 5-[(5-phospho-1-deoxy-D-ribulos-1-ylimino)methylamino]-1-(5-phospho-beta-D-ribosyl)imidazole-4-carboxamide + L-glutamine = D-erythro-1-(imidazol-4-yl)glycerol 3-phosphate + 5-amino-1-(5-phospho-beta-D-ribosyl)imidazole-4-carboxamide + L-glutamate + H(+). The catalysed reaction is L-glutamine + H2O = L-glutamate + NH4(+). Its pathway is amino-acid biosynthesis; L-histidine biosynthesis; L-histidine from 5-phospho-alpha-D-ribose 1-diphosphate: step 5/9. Its function is as follows. IGPS catalyzes the conversion of PRFAR and glutamine to IGP, AICAR and glutamate. The HisH subunit catalyzes the hydrolysis of glutamine to glutamate and ammonia as part of the synthesis of IGP and AICAR. The resulting ammonia molecule is channeled to the active site of HisF. In Listeria innocua serovar 6a (strain ATCC BAA-680 / CLIP 11262), this protein is Imidazole glycerol phosphate synthase subunit HisH.